The following is a 110-amino-acid chain: uncharacterized protein (110 aa).

This is an uncharacterized protein from Saccharomyces cerevisiae (strain ATCC 204508 / S288c) (Baker's yeast).